The primary structure comprises 119 residues: Large ribosomal subunit protein bL20 (119 aa).

The protein belongs to the bacterial ribosomal protein bL20 family.

Binds directly to 23S ribosomal RNA and is necessary for the in vitro assembly process of the 50S ribosomal subunit. It is not involved in the protein synthesizing functions of that subunit. The sequence is that of Large ribosomal subunit protein bL20 from Anoxybacillus flavithermus (strain DSM 21510 / WK1).